The primary structure comprises 527 residues: GMP synthase [glutamine-hydrolyzing] (527 aa).

The region spanning 20–208 (SVVILDYGSQ…LFDVCGCAPT (189 aa)) is the Glutamine amidotransferase type-1 domain. Cys97 functions as the Nucleophile in the catalytic mechanism. Catalysis depends on residues His182 and Glu184. The region spanning 209 to 402 (WTAESFVEQA…LGLPEEIVQR (194 aa)) is the GMPS ATP-PPase domain. Residue 236–242 (SGGVDSS) participates in ATP binding.

In terms of assembly, homodimer.

It carries out the reaction XMP + L-glutamine + ATP + H2O = GMP + L-glutamate + AMP + diphosphate + 2 H(+). Its pathway is purine metabolism; GMP biosynthesis; GMP from XMP (L-Gln route): step 1/1. Functionally, catalyzes the synthesis of GMP from XMP. In Thermomicrobium roseum (strain ATCC 27502 / DSM 5159 / P-2), this protein is GMP synthase [glutamine-hydrolyzing].